Here is a 275-residue protein sequence, read N- to C-terminus: NH(3)-dependent NAD(+) synthetase (275 aa).

ATP is bound at residue 47 to 54 (GMSGGQDS). D53 provides a ligand contact to Mg(2+). R141 provides a ligand contact to deamido-NAD(+). ATP is bound at residue T161. A Mg(2+)-binding site is contributed by E166. 2 residues coordinate deamido-NAD(+): K174 and D181. Residues K190 and T212 each coordinate ATP. 261–262 (HK) serves as a coordination point for deamido-NAD(+).

The protein belongs to the NAD synthetase family. Homodimer.

The catalysed reaction is deamido-NAD(+) + NH4(+) + ATP = AMP + diphosphate + NAD(+) + H(+). The protein operates within cofactor biosynthesis; NAD(+) biosynthesis; NAD(+) from deamido-NAD(+) (ammonia route): step 1/1. Catalyzes the ATP-dependent amidation of deamido-NAD to form NAD. Uses ammonia as a nitrogen source. The chain is NH(3)-dependent NAD(+) synthetase from Oceanobacillus iheyensis (strain DSM 14371 / CIP 107618 / JCM 11309 / KCTC 3954 / HTE831).